A 186-amino-acid chain; its full sequence is Hydra actinoporin-like toxin 6 (186 aa).

The N-terminal stretch at 1 to 21 (MLVYVCLVVILIQLPFGAAGG) is a signal peptide. Positions 158-160 (RAG) match the Cell attachment site motif.

It belongs to the actinoporin family. HALT subfamily. As to quaternary structure, octamer or nonamer in membranes. Monomer in the soluble state. In vitro, interacts with folate receptor alpha (of target organism). Expressed female germline during oogenesis.

Its subcellular location is the nematocyst. The protein localises to the secreted. It is found in the target cell membrane. Its function is as follows. Pore-forming protein that forms hydrophilic pores and causes cytolysis. Compared to equinatoxin-2 (AC P61914), it reveals lower cytolysis activity (5-12-fold difference, tested on erythrocytes), a larger pore size (probably 2-3 nm) and different affinity to membrane lipids (100-fold lower affinity to sphingomyelin). Binds to sulfatides. Shows cytolytic activity on HeLa cells, with a different potency than its paralogs (from most potent to less potent: HALT-4&gt;HALT-6~HALT-1&gt;HALT-3&gt;HALT-7&gt;HALT-2). Pore formation is a multi-step process that involves specific recognition of membrane lipid by a protein aromatic residues rich region, firm binding to the membrane (mainly driven by hydrophobic interactions) accompanied by the transfer of the N-terminal region to the lipid-water interface and finally pore formation after oligomerization of monomers. In vitro, binds to the folate receptor alpha (FOLR1), a GPI-anchored membrane protein that plays a major role in the uptake of folate/folic acid into cells via endocytosis, suggesting a possible involvement of this receptor in the mechanism of HALT-1-induced cell lysis. In vivo, does not cause visible paralysis in larvae of the blowfly Sarcophaga faculata, the most common arthropod prey of Hydra. This Hydra vulgaris (Hydra) protein is Hydra actinoporin-like toxin 6.